The chain runs to 475 residues: Lipoprotein lipase (475 aa).

An N-terminal signal peptide occupies residues 1 to 27 (MESKALLVLTLAVWLQSLTASRGGVAA). Residues 32-53 (RDFIDIESKFALRTPEDTAEDT) are interaction with GPIHBP1. A disulfide bond links C54 and C67. N70 is a glycosylation site (N-linked (GlcNAc...) asparagine). Y121 is subject to 3'-nitrotyrosine. The active-site Nucleophile is the S159. The Charge relay system role is filled by D183. 3'-nitrotyrosine is present on Y191. Residues A194, R197, S199, and D202 each coordinate Ca(2+). A disulfide bridge connects residues C243 and C266. Positions 243-266 (CNIGEAIRVIAERGLGDVDQLVKC) are essential for determining substrate specificity. The active-site Charge relay system is the H268. Cystine bridges form between C291–C310 and C302–C305. The PLAT domain occupies 341–464 (FHYQVKIHFS…KGKAPAVFVK (124 aa)). Position 343 is a 3'-nitrotyrosine (Y343). N386 is a glycosylation site (N-linked (GlcNAc...) asparagine). Residues 417–421 (WSDWW) are important for interaction with lipoprotein particles. The tract at residues 430 to 434 (KIRVK) is important for heparin binding. Residues 443–467 (IFCSREKVSHLQKGKAPAVFVKCHD) form an interaction with GPIHBP1 region. A disulfide bridge links C445 with C465.

The protein belongs to the AB hydrolase superfamily. Lipase family. As to quaternary structure, homodimer. Interacts with GPIHBP1 with 1:1 stoichiometry. Interacts with APOC2; the interaction activates LPL activity in the presence of lipids. Interaction with heparan sulfate proteoglycans is required to protect LPL against loss of activity. Associates with lipoprotein particles in blood plasma. Interacts with LMF1 and SEL1L; interaction with SEL1L is required to prevent aggregation of newly synthesized LPL in the endoplasmic reticulum (ER), and for normal export of LPL from the ER to the extracellular space. Interacts with SORL1; SORL1 acts as a sorting receptor, promoting LPL localization to endosomes and later to lysosomes, leading to degradation of newly synthesized LPL. Tyrosine nitration after lipopolysaccharide (LPS) challenge down-regulates the lipase activity. Detected in blood plasma. Detected in milk (at protein level).

It is found in the cell membrane. Its subcellular location is the secreted. The protein localises to the extracellular space. It localises to the extracellular matrix. It catalyses the reaction a triacylglycerol + H2O = a diacylglycerol + a fatty acid + H(+). The enzyme catalyses a 1,2-diacyl-sn-glycero-3-phosphocholine + H2O = a 2-acyl-sn-glycero-3-phosphocholine + a fatty acid + H(+). It carries out the reaction 1,2,3-tri-(9Z-octadecenoyl)-glycerol + H2O = di-(9Z)-octadecenoylglycerol + (9Z)-octadecenoate + H(+). The catalysed reaction is 1,2-di-(9Z-octadecenoyl)-sn-glycero-3-phosphocholine + H2O = (9Z-octadecenoyl)-sn-glycero-3-phosphocholine + (9Z)-octadecenoate + H(+). It catalyses the reaction 1,2,3-tributanoylglycerol + H2O = dibutanoylglycerol + butanoate + H(+). The enzyme catalyses 1,2-dihexadecanoyl-sn-glycero-3-phosphocholine + H2O = hexadecanoyl-sn-glycero-3-phosphocholine + hexadecanoate + H(+). Its activity is regulated as follows. The apolipoprotein APOC2 acts as a coactivator of LPL activity. Ca(2+) binding promotes protein stability and formation of the active homodimer. Interaction with GPIHBP1 protects LPL against inactivation by ANGPTL4. Inhibited by NaCl. Key enzyme in triglyceride metabolism. Catalyzes the hydrolysis of triglycerides from circulating chylomicrons and very low density lipoproteins (VLDL), and thereby plays an important role in lipid clearance from the blood stream, lipid utilization and storage. Although it has both phospholipase and triglyceride lipase activities it is primarily a triglyceride lipase with low but detectable phospholipase activity. Mediates margination of triglyceride-rich lipoprotein particles in capillaries. Recruited to its site of action on the luminal surface of vascular endothelium by binding to GPIHBP1 and cell surface heparan sulfate proteoglycans. The chain is Lipoprotein lipase (LPL) from Homo sapiens (Human).